The primary structure comprises 706 residues: Mitochondrial intermediate peptidase, mitochondrial (706 aa).

The transit peptide at 1–29 directs the protein to the mitochondrion; that stretch reads MWKLTRRLQPHINSTRWLVRNFRNGGAGD. The disordered stretch occupies residues 212 to 238; that stretch reads NPTYRSTSGGSRGSTRSAHKSKQKGFR. Low complexity predominate over residues 214 to 227; the sequence is TYRSTSGGSRGSTR. Position 491 (histidine 491) interacts with Zn(2+). Glutamate 492 is an active-site residue. Positions 495 and 520 each coordinate Zn(2+).

The protein belongs to the peptidase M3 family. Zn(2+) is required as a cofactor.

It is found in the mitochondrion. Aminopeptidase which cleaves preproteins, imported into the mitochondrion, to their mature size. Could cleave both preproteins and preprotein intermediates already cleaved by the mitochondrial processing peptidase (MPP). The sequence is that of Mitochondrial intermediate peptidase, mitochondrial from Arabidopsis thaliana (Mouse-ear cress).